The following is a 225-amino-acid chain: UPF0758 protein Shewmr7_0359 (225 aa).

Residues 102–224 form the MPN domain; the sequence is VLTNPDLTRD…IVSFAERGWI (123 aa). Positions 173, 175, and 186 each coordinate Zn(2+). Positions 173-186 match the JAMM motif motif; that stretch reads HNHPSGIAEPSQAD.

Belongs to the UPF0758 family.

The polypeptide is UPF0758 protein Shewmr7_0359 (Shewanella sp. (strain MR-7)).